A 391-amino-acid chain; its full sequence is MSGPVPSRARVYTDVNTHRPREYWDYESHVVEWGNQDDYQLVRKLGRGKYSEVFEAINITNNEKVVVKILKPVKKKKIKREIKILENLRGGPNIITLADIVKDPVSRTPALVFEHVNNTDFKQLYQTLTDYDIRFYMYEILKALDYCHSMGIMHRDVKPHNVMIDHEHRKLRLIDWGLAEFYHPGQEYNVRVASRYFKGPELLVDYQMYDYSLDMWSLGCMLASMIFRKEPFFHGHDNYDQLVRIAKVLGTEDLYDYIDKYNIELDPRFNDILGRHSRKRWERFVHSENQHLVSPEALDFLDKLLRYDHQSRLTAREAMEHPYFYTVVKDQARMSSAGMAGGSTPVSSANMMSGISSVPTPSPLGPLAGSPVIAAANSLGIPVPAAAGAQQ.

The interaction with beta subunit stretch occupies residues 36 to 41 (QDDYQL). In terms of domain architecture, Protein kinase spans 39 to 324 (YQLVRKLGRG…AREAMEHPYF (286 aa)). ATP is bound by residues 45 to 53 (LGRGKYSEV) and K68. The active-site Proton acceptor is D156. 2 positions are modified to phosphothreonine; by CDK1: T344 and T360. S362 and S370 each carry phosphoserine; by CDK1.

The protein belongs to the protein kinase superfamily. Ser/Thr protein kinase family. CK2 subfamily. In terms of assembly, heterotetramer composed of two catalytic subunits (alpha chain and/or alpha' chain) and two regulatory subunits (beta chains). The tetramer can exist as a combination of 2 alpha/2 beta, 2 alpha'/2 beta or 1 alpha/1 alpha'/2 beta subunits. Also part of a CK2-SPT16-SSRP1 complex composed of SSRP1, SUPT16H, CSNK2A1, CSNK2A2 and CSNK2B, which forms following UV irradiation. Interacts with RNPS1. Interacts with SNAI1. Interacts with PML. Interacts with CCAR2. Interacts with HIRIP3. In terms of processing, phosphorylated at Thr-344, Thr-360, Ser-362 and Ser-370 by CDK1 in prophase and metaphase and dephosphorylated during anaphase. Phosphorylation does not directly affect casein kinase 2 activity, but may contribute to its regulation by forming binding sites for interacting proteins and/or targeting it to different compartments.

The protein localises to the nucleus. It carries out the reaction L-seryl-[protein] + ATP = O-phospho-L-seryl-[protein] + ADP + H(+). The enzyme catalyses L-threonyl-[protein] + ATP = O-phospho-L-threonyl-[protein] + ADP + H(+). With respect to regulation, constitutively active protein kinase whose activity is not directly affected by phosphorylation. Seems to be regulated by level of expression and localization. In terms of biological role, catalytic subunit of a constitutively active serine/threonine-protein kinase complex that phosphorylates a large number of substrates containing acidic residues C-terminal to the phosphorylated serine or threonine. Regulates numerous cellular processes, such as cell cycle progression, apoptosis and transcription, as well as viral infection. May act as a regulatory node which integrates and coordinates numerous signals leading to an appropriate cellular response. During mitosis, functions as a component of the p53/TP53-dependent spindle assembly checkpoint (SAC) that maintains cyclin-B-CDK1 activity and G2 arrest in response to spindle damage. Also required for p53/TP53-mediated apoptosis, phosphorylating 'Ser-392' of p53/TP53 following UV irradiation. Phosphorylates a number of DNA repair proteins in response to DNA damage, such as MDC1, MRE11, RAD9A, RAD51 and HTATSF1, promoting their recruitment to DNA damage sites. Can also negatively regulate apoptosis. Phosphorylates the caspases CASP9 and CASP2 and the apoptotic regulator NOL3. Phosphorylation protects CASP9 from cleavage and activation by CASP8, and inhibits the dimerization of CASP2 and activation of CASP8. Phosphorylates YY1, protecting YY1 from cleavage by CASP7 during apoptosis. Regulates transcription by direct phosphorylation of RNA polymerases I, II, III and IV. Also phosphorylates and regulates numerous transcription factors including NF-kappa-B, STAT1, CREB1, IRF1, IRF2, ATF1, ATF4, SRF, MAX, JUN, FOS, MYC and MYB. Phosphorylates Hsp90 and its co-chaperones FKBP4 and CDC37, which is essential for chaperone function. Mediates sequential phosphorylation of FNIP1, promoting its gradual interaction with Hsp90, leading to activate both kinase and non-kinase client proteins of Hsp90. Regulates Wnt signaling by phosphorylating CTNNB1 and the transcription factor LEF1. Acts as an ectokinase that phosphorylates several extracellular proteins. Phosphorylates PML at 'Ser-565' and primes it for ubiquitin-mediated degradation. Plays an important role in the circadian clock function by phosphorylating BMAL1 at 'Ser-90' which is pivotal for its interaction with CLOCK and which controls CLOCK nuclear entry. Phosphorylates FMR1, promoting FMR1-dependent formation of a membraneless compartment. May phosphorylate histone H2A on 'Ser-1'. The sequence is that of Casein kinase II subunit alpha (Csnk2a1) from Rattus norvegicus (Rat).